Consider the following 151-residue polypeptide: Mini-ribonuclease 3 (151 aa).

Residue D28 is part of the active site.

The protein belongs to the MrnC RNase family. Homodimer. Requires Mg(2+) as cofactor.

The protein localises to the cytoplasm. Its function is as follows. Involved in correct processing of both the 5' and 3' ends of 23S rRNA precursor. Processes 30S rRNA precursor transcript even in absence of ribonuclease 3 (Rnc); Rnc processes 30S rRNA into smaller rRNA precursors. The chain is Mini-ribonuclease 3 from Clostridium tetani (strain Massachusetts / E88).